Reading from the N-terminus, the 414-residue chain is L-cysteine:1D-myo-inositol 2-amino-2-deoxy-alpha-D-glucopyranoside ligase (414 aa).

Residue Cys44 participates in Zn(2+) binding. L-cysteinyl-5'-AMP-binding positions include 44–47 (CGIT), Thr59, and 82–84 (NIT). Residues 46-56 (ITPYDSTHLGH) carry the 'HIGH' region motif. Residues 188–193 (ERGGDP) carry the 'ERGGDP' region motif. Trp228 serves as a coordination point for L-cysteinyl-5'-AMP. Residue Cys232 coordinates Zn(2+). 250 to 252 (GSD) contacts L-cysteinyl-5'-AMP. His257 is a Zn(2+) binding site. Ile284 is an L-cysteinyl-5'-AMP binding site. Residues 290–294 (KMSKS) carry the 'KMSKS' region motif.

Belongs to the class-I aminoacyl-tRNA synthetase family. MshC subfamily. In terms of assembly, monomer. It depends on Zn(2+) as a cofactor.

The enzyme catalyses 1D-myo-inositol 2-amino-2-deoxy-alpha-D-glucopyranoside + L-cysteine + ATP = 1D-myo-inositol 2-(L-cysteinylamino)-2-deoxy-alpha-D-glucopyranoside + AMP + diphosphate + H(+). Its function is as follows. Catalyzes the ATP-dependent condensation of GlcN-Ins and L-cysteine to form L-Cys-GlcN-Ins. The protein is L-cysteine:1D-myo-inositol 2-amino-2-deoxy-alpha-D-glucopyranoside ligase of Corynebacterium aurimucosum (strain ATCC 700975 / DSM 44827 / CIP 107346 / CN-1) (Corynebacterium nigricans).